The chain runs to 299 residues: Oxygen-dependent coproporphyrinogen-III oxidase (299 aa).

Ser92 is a binding site for substrate. A divalent metal cation-binding residues include His96 and His106. The active-site Proton donor is His106. 108–110 (NVR) lines the substrate pocket. A divalent metal cation contacts are provided by His145 and His175. Residues 240–275 (YVEFNLVWDRGTLFGLQTGGRTESILMSMPPLVRWE) are important for dimerization. 258–260 (GGR) lines the substrate pocket.

The protein belongs to the aerobic coproporphyrinogen-III oxidase family. As to quaternary structure, homodimer. A divalent metal cation is required as a cofactor.

It is found in the cytoplasm. It carries out the reaction coproporphyrinogen III + O2 + 2 H(+) = protoporphyrinogen IX + 2 CO2 + 2 H2O. Its pathway is porphyrin-containing compound metabolism; protoporphyrin-IX biosynthesis; protoporphyrinogen-IX from coproporphyrinogen-III (O2 route): step 1/1. Involved in the heme biosynthesis. Catalyzes the aerobic oxidative decarboxylation of propionate groups of rings A and B of coproporphyrinogen-III to yield the vinyl groups in protoporphyrinogen-IX. This chain is Oxygen-dependent coproporphyrinogen-III oxidase, found in Salmonella choleraesuis (strain SC-B67).